We begin with the raw amino-acid sequence, 63 residues long: MSKVCEICGKGPSFGNNVSHANNKTRTTWHPNLQKVKAVRNGSVKTIKVCTRCIRSGHVTKAV.

The protein belongs to the bacterial ribosomal protein bL28 family.

This Geobacter sulfurreducens (strain ATCC 51573 / DSM 12127 / PCA) protein is Large ribosomal subunit protein bL28.